The sequence spans 173 residues: Myosin light chain 5 (173 aa).

A disordered region spans residues 1–20 (MASRKTKKKEGGALRAQRAS). EF-hand domains lie at 30-65 (TQIQ…LGKT), 100-135 (DAEE…QADK), and 136-171 (MTAE…GEEK). Ca(2+) is bound by residues D43, N45, D47, and D54.

Myosin is a hexamer of 2 heavy chains and 4 light chains. Expressed in fetal skeletal muscle and retina.

This is Myosin light chain 5 (MYL5) from Homo sapiens (Human).